Reading from the N-terminus, the 263-residue chain is Putative methyltransferase DDB_G0268948 (263 aa).

It belongs to the methyltransferase superfamily.

This chain is Putative methyltransferase DDB_G0268948, found in Dictyostelium discoideum (Social amoeba).